Reading from the N-terminus, the 43-residue chain is Seed non-specific lipid transfer protein-like (43 aa).

Belongs to the plant LTP family. As to quaternary structure, homodimer.

In terms of biological role, plant non-specific lipid-transfer proteins transfer phospholipids as well as galactolipids across membranes. May play a role in wax or cutin deposition in the cell walls of expanding epidermal cells and certain secretory tissues. This isoform inhibits the hyphal growth of several fungi in vitro. The polypeptide is Seed non-specific lipid transfer protein-like (Raphanus sativus (Radish)).